The sequence spans 145 residues: Ribonuclease HI (145 aa).

An RNase H type-1 domain is found at methionine 1–alanine 142. Mg(2+)-binding residues include aspartate 10, glutamate 48, aspartate 70, and aspartate 134.

The protein belongs to the RNase H family. As to quaternary structure, monomer. It depends on Mg(2+) as a cofactor.

The protein resides in the cytoplasm. The enzyme catalyses Endonucleolytic cleavage to 5'-phosphomonoester.. In terms of biological role, endonuclease that specifically degrades the RNA of RNA-DNA hybrids. This chain is Ribonuclease HI, found in Neisseria meningitidis serogroup B (strain ATCC BAA-335 / MC58).